The sequence spans 281 residues: Large ribosomal subunit protein uL2 (281 aa).

The disordered stretch occupies residues 223–281 (VRGSVMNPVDHPHGGGEGKQPVGRKSPLTPWGKIALGVKTRKTKKSSNKLILRRRKDAK). Basic residues predominate over residues 261 to 281 (KTRKTKKSSNKLILRRRKDAK).

Belongs to the universal ribosomal protein uL2 family. Part of the 50S ribosomal subunit. Forms a bridge to the 30S subunit in the 70S ribosome.

Functionally, one of the primary rRNA binding proteins. Required for association of the 30S and 50S subunits to form the 70S ribosome, for tRNA binding and peptide bond formation. It has been suggested to have peptidyltransferase activity; this is somewhat controversial. Makes several contacts with the 16S rRNA in the 70S ribosome. The chain is Large ribosomal subunit protein uL2 from Mycoplasmopsis synoviae (strain 53) (Mycoplasma synoviae).